The sequence spans 207 residues: Outer-membrane lipoprotein LolB (207 aa).

Positions 1 to 21 are cleaved as a signal peptide; sequence MTLPDFRLIRLLPLASLVLTA. Cys-22 is lipidated: N-palmitoyl cysteine. Cys-22 carries S-diacylglycerol cysteine lipidation.

It belongs to the LolB family. In terms of assembly, monomer.

Its subcellular location is the cell outer membrane. Its function is as follows. Plays a critical role in the incorporation of lipoproteins in the outer membrane after they are released by the LolA protein. In Salmonella arizonae (strain ATCC BAA-731 / CDC346-86 / RSK2980), this protein is Outer-membrane lipoprotein LolB.